We begin with the raw amino-acid sequence, 148 residues long: Holo-[acyl-carrier-protein] synthase (148 aa).

Positions 8 and 57 each coordinate Mg(2+).

This sequence belongs to the P-Pant transferase superfamily. AcpS family. It depends on Mg(2+) as a cofactor.

It localises to the cytoplasm. The catalysed reaction is apo-[ACP] + CoA = holo-[ACP] + adenosine 3',5'-bisphosphate + H(+). Its function is as follows. Transfers the 4'-phosphopantetheine moiety from coenzyme A to a Ser of acyl-carrier-protein. The protein is Holo-[acyl-carrier-protein] synthase of Ruegeria pomeroyi (strain ATCC 700808 / DSM 15171 / DSS-3) (Silicibacter pomeroyi).